We begin with the raw amino-acid sequence, 162 residues long: MSIILIGFMGAGKSTVAKLLAEEFTDLDKLIEEEIEMPIATFFELFGEADFRKIENEVFELAVQKDIIIATGGGIIENPKNLNVLDRASRVVFLTADFDTLWKRISMDWQNVRPLAQDKEAAQLLFEKRMKDYSLVADLTIDVTDKSPEQIAEQIREKWEIE.

Position 10–15 (10–15 (GAGKST)) interacts with ATP. Ser14 is a Mg(2+) binding site. Substrate-binding residues include Asp28, Arg52, and Gly73. Arg113 lines the ATP pocket. Arg129 lines the substrate pocket.

Belongs to the shikimate kinase family. In terms of assembly, monomer. Mg(2+) is required as a cofactor.

The protein localises to the cytoplasm. The catalysed reaction is shikimate + ATP = 3-phosphoshikimate + ADP + H(+). Its pathway is metabolic intermediate biosynthesis; chorismate biosynthesis; chorismate from D-erythrose 4-phosphate and phosphoenolpyruvate: step 5/7. Catalyzes the specific phosphorylation of the 3-hydroxyl group of shikimic acid using ATP as a cosubstrate. The chain is Shikimate kinase from Lactococcus lactis subsp. cremoris (strain MG1363).